The primary structure comprises 279 residues: Monoacylglycerol lipase (279 aa).

The Nucleophile role is filled by S110. Active-site charge relay system residues include D226 and H256.

It belongs to the AB hydrolase superfamily. In terms of assembly, monomer.

The protein localises to the secreted. It is found in the cell wall. It catalyses the reaction a 1-acylglycerol + H2O = glycerol + a fatty acid + H(+). The catalysed reaction is Hydrolyzes glycerol monoesters of long-chain fatty acids.. It carries out the reaction 1-butyrylglycerol + H2O = butanoate + glycerol + H(+). The enzyme catalyses 1-octanoylglycerol + H2O = octanoate + glycerol + H(+). It catalyses the reaction 1-decanoylglycerol + H2O = decanoate + glycerol + H(+). The catalysed reaction is 1-dodecanoylglycerol + H2O = dodecanoate + glycerol + H(+). It carries out the reaction 1-tetradecanoylglycerol + H2O = tetradecanoate + glycerol + H(+). The enzyme catalyses 1-(9Z-octadecenoyl)-glycerol + H2O = glycerol + (9Z)-octadecenoate + H(+). It catalyses the reaction 2-(9Z-octadecenoyl)-glycerol + H2O = glycerol + (9Z)-octadecenoate + H(+). Its activity is regulated as follows. Inhibited by the serine esterase inhibitors PMSF (100%), E600 (80%) and THL (22%). Virtual screening identified a tautomer of ZINC13451138, known inhibitor for HIV-1 integrase, as a potential inhibitor. Functionally, involved in the hydrolysis of exogenous host lipids during chronic infection. Catalyzes the hydrolysis of both monoacylglycerols (MAG) and diacylglycerols (DAG), with a preference for MAG. It hydrolyzes 2-MAG, 1-3-MAG and MAG with short, medium and long chain fatty acids such as 1-monobutyroyl-rac-glycerol (MC4), 1-mono-octanoyl-rac-glycerol (MC8), 1-monodecanoyl-rac-glycerol (MC10), 1-monolauroyl-rac-glycerol (MC12), 1-monomyristoyl-rac-glycerol (MC14) and 1-mono-oleyl-rac-glycerol (MC18:1). Also able to hydrolyze DAG with short (DiC6) and medium (DiC10) fatty acid chains, but not with longest fatty acid chains. Can also hydrolyze vinyl laurate (VC12), vinyl butyrate (VC4) and vinyl propionate (VC3). Induces an inflammatory response and cell apoptosis in the host cells. Increases expression of IL-6, NF-kappaB, TLR-2, TLR-6, TNF-alpha, and MyD88 in mouse alveolar macrophage RAW264.7 cells. Persistent expression induces RAW264.7 cell apoptosis in vitro. The sequence is that of Monoacylglycerol lipase from Mycobacterium tuberculosis (strain ATCC 25618 / H37Rv).